The following is a 220-amino-acid chain: 7-cyano-7-deazaguanine synthase (220 aa).

Position 11 to 21 (11 to 21 (VSGGMDSVTLM)) interacts with ATP. 4 residues coordinate Zn(2+): C186, C194, C197, and C200.

This sequence belongs to the QueC family. Zn(2+) is required as a cofactor.

It catalyses the reaction 7-carboxy-7-deazaguanine + NH4(+) + ATP = 7-cyano-7-deazaguanine + ADP + phosphate + H2O + H(+). Its pathway is purine metabolism; 7-cyano-7-deazaguanine biosynthesis. In terms of biological role, catalyzes the ATP-dependent conversion of 7-carboxy-7-deazaguanine (CDG) to 7-cyano-7-deazaguanine (preQ(0)). In Porphyromonas gingivalis (strain ATCC 33277 / DSM 20709 / CIP 103683 / JCM 12257 / NCTC 11834 / 2561), this protein is 7-cyano-7-deazaguanine synthase.